A 637-amino-acid polypeptide reads, in one-letter code: ATP-dependent zinc metalloprotease FtsH (637 aa).

The Cytoplasmic segment spans residues 1–44 (MAKHSQHSSPPRKLFDTLNDLWQRAKSEAGLSAEGPEGTRRRNN). The helical transmembrane segment at 45–65 (LILYLLLVLSTLYLLNGYQTL) threads the bilayer. Residues 66–141 (RNEEIPYSEF…TVRYGSNWFS (76 aa)) lie on the Periplasmic side of the membrane. The chain crosses the membrane as a helical span at residues 142–162 (SLIFNWIVPIVLLTLFWTWMA). At 163–637 (RRMTGGRGFL…VKAVIREAAS (475 aa)) the chain is on the cytoplasmic side. 231 to 238 (GPPGTGKT) provides a ligand contact to ATP. Residue histidine 454 coordinates Zn(2+). Glutamate 455 is a catalytic residue. Zn(2+) contacts are provided by histidine 458 and aspartate 531.

The protein in the central section; belongs to the AAA ATPase family. It in the C-terminal section; belongs to the peptidase M41 family. In terms of assembly, homohexamer. It depends on Zn(2+) as a cofactor.

It localises to the cell inner membrane. Its function is as follows. Acts as a processive, ATP-dependent zinc metallopeptidase for both cytoplasmic and membrane proteins. Plays a role in the quality control of integral membrane proteins. The chain is ATP-dependent zinc metalloprotease FtsH from Methylococcus capsulatus (strain ATCC 33009 / NCIMB 11132 / Bath).